The chain runs to 492 residues: MGTEAEQPSPPAQQQDQENPPLCKAQNPKPARLYRFVLIFVAGSLAAWTFHALSSTNLVWKLRQLHHLPTAHYLQTRDEFALYSVEELNAFKEFYDKSVSDSVGASYTEAEQTNIKEALGALRMAQDLYLAGKDDKAARLFEHALALAPRHPEVLLRYGEFLEHNQRNIVLADQYYFQALTISPSNSEALANRQRTADVVQSLDERRLESLDSKRDALSAIHESNGALRRAKKEAYFQHIYHSVGIEGNTMTLAQTRSILETRMAVDGKSIDEHNEILGMDLAMKYINASLVQKIDITIKDILELHRRVLGHVDPIEGGEFRRNQVYVGGHIPPGPGDLALLMQRFERWLNSEHSSTLHPVNYAALAHYKLVHIHPFVDGNGRTSRLLMNTLLMRAGYPPVIIPKQQRSKYYHFLKLANEGDIRPFVRFIADCTEKTLDLYLWATSDLPQQIPMLIQTESEAGERLAQMQSPNVAQRSSILEFYESGSGDLP.

Low complexity predominate over residues Met-1 to Glu-18. Residues Met-1–Gln-26 form a disordered region. The chain crosses the membrane as a helical span at residues Leu-33–Ser-55. TPR repeat units follow at residues Ala-118 to His-151 and Pro-152 to Asn-186. The short motif at Ser-243 to Gly-248 is the Inhibitory (S/T)XXXE(G/N) motif element. ATP contacts are provided by residues Glu-247 and Val-328–His-331. Positions Ile-297–Asp-432 constitute a Fido domain. The active site involves His-375. ATP is bound by residues Asp-379–Arg-386, Tyr-411–Tyr-412, and Asn-419.

This sequence belongs to the fic family. Homodimer; homodimerization may regulate adenylyltransferase and phosphodiesterase activities.

It localises to the membrane. The catalysed reaction is L-tyrosyl-[protein] + ATP = O-(5'-adenylyl)-L-tyrosyl-[protein] + diphosphate. It carries out the reaction L-threonyl-[protein] + ATP = 3-O-(5'-adenylyl)-L-threonyl-[protein] + diphosphate. The enzyme catalyses 3-O-(5'-adenylyl)-L-threonyl-[protein] + H2O = L-threonyl-[protein] + AMP + H(+). The side chain of Glu-247 determines which of the two opposing activities (AMPylase or de-AMPylase) will take place. In response to endoplasmic reticulum stress, mediates de-AMPylase activity. Adenylyltransferase activity is inhibited by the inhibitory helix present at the N-terminus: Glu-247 binds ATP and competes with ATP-binding at Arg-386, thereby preventing adenylyltransferase activity. In unstressed cells, disengagement of Glu-247 promotes adenylyltransferase activity. Activation dissociates ATP-binding from Glu-247, allowing ordered binding of the entire ATP moiety with the alpha-phosphate in an orientation that is productive for accepting an incoming target hydroxyl side chain. In terms of biological role, protein that can both mediate the addition of adenosine 5'-monophosphate (AMP) to specific residues of target proteins (AMPylation), and the removal of the same modification from target proteins (de-AMPylation), depending on the context. The side chain of Glu-247 determines which of the two opposing activities (AMPylase or de-AMPylase) will take place. Acts as a key regulator of the unfolded protein response (UPR) by mediating AMPylation or de-AMPylation of Hsc70-3/BiP. In unstressed cells, acts as an adenylyltransferase by mediating AMPylation of Hsc70-3/BiP at 'Thr-518', thereby inactivating it. In response to endoplasmic reticulum stress, acts as a phosphodiesterase by mediating removal of ATP (de-AMPylation) from Hsc70-3/BiP at 'Thr-518', leading to restore HSPA5/BiP activity. The chain is Protein adenylyltransferase Fic from Drosophila melanogaster (Fruit fly).